Reading from the N-terminus, the 277-residue chain is Radial spoke head protein 9 homolog (277 aa).

It belongs to the flagellar radial spoke RSP9 family. Component of axonemal radial spoke complexes.

Its subcellular location is the cytoplasm. The protein resides in the cytoskeleton. It is found in the cilium axoneme. It localises to the flagellum axoneme. The protein localises to the cell projection. Its subcellular location is the kinocilium. In terms of biological role, functions as part of axonemal radial spoke complexes that play an important part in the motility of sperm and cilia. Required for motility of olfactory and neural cilia and for the structural integrity of ciliary axonemes in both 9+0 and 9+2 motile cilia. Essential for both the radial spoke head assembly and the central pair microtubule stability in ependymal motile cilia. In Danio rerio (Zebrafish), this protein is Radial spoke head protein 9 homolog (rsph9).